Here is a 310-residue protein sequence, read N- to C-terminus: Olfactory receptor 9A2 (310 aa).

Residues 1 to 24 (MMDNHSSATEFHLLGFPGSQGLHH) are Extracellular-facing. Asn-4 is a glycosylation site (N-linked (GlcNAc...) asparagine). Residues 25 to 45 (ILFAIFFFFYLVTLMGNTVII) form a helical membrane-spanning segment. Residues 46–53 (VIVCVDKR) lie on the Cytoplasmic side of the membrane. A helical transmembrane segment spans residues 54–74 (LQSPMYFFLSHLSTLEILVTT). The Extracellular segment spans residues 75-98 (IIVPMMLWGLLFLGCRQYLSLHVS). The Cytoplasmic portion of the chain corresponds to 117-135 (DRYVAVCNPLRYNIIMNSS). The helical transmembrane segment at 136 to 156 (TCIWVVIVSWVFGFLSEIWPI) threads the bilayer. The Extracellular portion of the chain corresponds to 157-193 (YATFQFTFRKSNSLDHFYCDRGQLLKLSCDNTLLTEF). The chain crosses the membrane as a helical span at residues 194 to 213 (ILFLMAVFILIGSLIPTIVS). Residues 214–233 (YTYIISTILKIPSASGRRKA) lie on the Cytoplasmic side of the membrane. The chain crosses the membrane as a helical span at residues 234–254 (FSTFASHFTCVVIGYGSCLFL). Over 255–267 (YVKPKQTQGVEYN) the chain is Extracellular. A helical transmembrane segment spans residues 268-288 (KIVSLLVSVLTPFLNPFIFTL). Residues 289-310 (RNDKVKEALRDGMKRCCQLLKD) are Cytoplasmic-facing.

This sequence belongs to the G-protein coupled receptor 1 family.

Its subcellular location is the cell membrane. In terms of biological role, odorant receptor. The protein is Olfactory receptor 9A2 (OR9A2) of Homo sapiens (Human).